We begin with the raw amino-acid sequence, 393 residues long: uncharacterized protein (393 aa).

The interval Pro-345–Thr-393 is disordered. The span at Ala-349–Thr-361 shows a compositional bias: basic and acidic residues. A compositionally biased stretch (basic residues) spans Lys-383 to Thr-393.

This is an uncharacterized protein from Ictalurid herpesvirus 1 (strain Auburn) (IcHV-1).